The sequence spans 688 residues: UvrABC system protein B (688 aa).

Residues 41–429 (ANFEAGLAKQ…AGEVTELVVR (389 aa)) form the Helicase ATP-binding domain. 54–61 (GVTGSGKT) serves as a coordination point for ATP. The Beta-hairpin motif lies at 107–130 (YYDYYQPEAYVPSSDTFIEKDSSI). A Helicase C-terminal domain is found at 446–612 (QVDDLMSEIH…SVERPISDIM (167 aa)). The segment at 616–646 (REDAAEKKSGKGRSKSRQVAEETPDYRAMKP) is disordered. Over residues 633–645 (QVAEETPDYRAMK) the composition is skewed to basic and acidic residues. The region spanning 650 to 685 (AGKLKSLEQKMYQHAKDLEFEAAAQIRDQIQKLKTA) is the UVR domain.

The protein belongs to the UvrB family. As to quaternary structure, forms a heterotetramer with UvrA during the search for lesions. Interacts with UvrC in an incision complex.

The protein localises to the cytoplasm. In terms of biological role, the UvrABC repair system catalyzes the recognition and processing of DNA lesions. A damage recognition complex composed of 2 UvrA and 2 UvrB subunits scans DNA for abnormalities. Upon binding of the UvrA(2)B(2) complex to a putative damaged site, the DNA wraps around one UvrB monomer. DNA wrap is dependent on ATP binding by UvrB and probably causes local melting of the DNA helix, facilitating insertion of UvrB beta-hairpin between the DNA strands. Then UvrB probes one DNA strand for the presence of a lesion. If a lesion is found the UvrA subunits dissociate and the UvrB-DNA preincision complex is formed. This complex is subsequently bound by UvrC and the second UvrB is released. If no lesion is found, the DNA wraps around the other UvrB subunit that will check the other stand for damage. The protein is UvrABC system protein B of Xanthomonas oryzae pv. oryzae (strain KACC10331 / KXO85).